Consider the following 571-residue polypeptide: MDRSKRNSIAGFPPRVERLEEFEGGGGGEGNVSQVGRVWPSSYRALISAFSRLTRLDDFTCEKIGSGFFSEVFKVRHRASGQVMALKMNTLSSNRANMLKEVQLMNRLSHPNILRFMGVCVHQGQLHALTEYINSGNLEQLLDSNLHLPWTVRVKLAYDIAVGLSYLHFKGIFHRDLTSKNCLIKRDENGYSAVVADFGLAEKIPDVSMGSEKLAVVGSPFWMAPEVLRDEPYNEKADVFSYGIILCEIIARIQADPDYLPRTENFGLDYDAFQHMVGDCPPDFLQLTFNCCNMDPKLRPSFVEIGKTLEEILSRLQEEEQERDRKLQPTARGLLEKAPGVKRLSSLDDKIPHKSPCPRRTIWLSRSQSDIFSRKPPRTVSVLDPYYRPRDGAARTPKVNPFSARQDLMGGKIKFFDLPSKSVISLVFDLDAPGPGTMPLADWQEPLAPPIRRWRSLPGSPEFLHQEACPFVGREESLSDGPPPRLSSLKYRVKEIPPFRASALPAAQAHEAMDCSILQEENGFGSRPQGTSPCPAGASEEMEVEERPAGSTPATFSTSGIGLQTQGKQDG.

The Protein kinase domain occupies 58 to 313; the sequence is DFTCEKIGSG…EIGKTLEEIL (256 aa). ATP is bound by residues 64-72 and Lys-87; that span reads IGSGFFSEV. Asp-176 functions as the Proton acceptor in the catalytic mechanism. Residue Ser-219 is modified to Phosphoserine; by autocatalysis. Phosphoserine is present on residues Ser-369, Ser-456, and Ser-460. The segment at 521–571 is disordered; it reads ENGFGSRPQGTSPCPAGASEEMEVEERPAGSTPATFSTSGIGLQTQGKQDG. Positions 552 to 571 are enriched in polar residues; sequence TPATFSTSGIGLQTQGKQDG.

Belongs to the protein kinase superfamily. TKL Ser/Thr protein kinase family. Mg(2+) serves as cofactor. Requires Mn(2+) as cofactor. As to expression, predominantly expressed in testis and prostate. Found predominantly in non-germinal Sertoli cells.

The protein localises to the nucleus. The enzyme catalyses L-seryl-[protein] + ATP = O-phospho-L-seryl-[protein] + ADP + H(+). It carries out the reaction L-threonyl-[protein] + ATP = O-phospho-L-threonyl-[protein] + ADP + H(+). The catalysed reaction is L-tyrosyl-[protein] + ATP = O-phospho-L-tyrosyl-[protein] + ADP + H(+). Activated by autophosphorylation on Ser-219. Dual specificity protein kinase activity catalyzing autophosphorylation and phosphorylation of exogenous substrates on both serine/threonine and tyrosine residues. Phosphorylates cofilin at 'Ser-3'. May play an important role in spermatogenesis. This is Dual specificity testis-specific protein kinase 2 (TESK2) from Homo sapiens (Human).